Reading from the N-terminus, the 356-residue chain is Kelch domain-containing protein VC_1773 (356 aa).

Kelch repeat units follow at residues 72–125, 163–210, 288–331, and 333–355; these read KLYV…SLSP, TIFM…HKNN, NLYA…ASNG, and AMYVLGGENSNGDAMTRCLSLLM.

In Vibrio cholerae serotype O1 (strain ATCC 39315 / El Tor Inaba N16961), this protein is Kelch domain-containing protein VC_1773.